Consider the following 134-residue polypeptide: uncharacterized protein (134 aa).

The next 2 helical transmembrane spans lie at 49–69 (VAVP…SLDV) and 71–91 (LSMT…LNKV).

It localises to the cell membrane. This is an uncharacterized protein from Mycobacterium tuberculosis (strain ATCC 25618 / H37Rv).